A 179-amino-acid polypeptide reads, in one-letter code: Apoptosis regulator DPV022 (179 aa).

The chain crosses the membrane as a helical span at residues 148-170; it reads VLITNYLKITIFGAILGITAYYI.

In terms of assembly, interacts with host BAX and BAK1.

The protein resides in the host mitochondrion. It localises to the host membrane. Plays a role in the inhibition of host apoptosis by sequestering and inactivating several proapoptotic BCL-2 proteins, including BAK1 and BAX. Prevents the conformational activation of both of them. The sequence is that of Apoptosis regulator DPV022 (DPV022) from Deerpox virus (strain Mule deer/United States/W-848-83/1983) (DPV).